A 384-amino-acid polypeptide reads, in one-letter code: Dual-specificity RNA methyltransferase RlmN (384 aa).

The active-site Proton acceptor is glutamate 93. The Radical SAM core domain occupies 99–339; the sequence is EDTRGTLCVS…TTIRKTRGDD (241 aa). A disulfide bridge links cysteine 106 with cysteine 344. [4Fe-4S] cluster is bound by residues cysteine 113, cysteine 117, and cysteine 120. Residues 170 to 171, serine 202, 224 to 226, and asparagine 301 each bind S-adenosyl-L-methionine; these read GE and SLH. The S-methylcysteine intermediate role is filled by cysteine 344.

The protein belongs to the radical SAM superfamily. RlmN family. The cofactor is [4Fe-4S] cluster.

The protein resides in the cytoplasm. The enzyme catalyses adenosine(2503) in 23S rRNA + 2 reduced [2Fe-2S]-[ferredoxin] + 2 S-adenosyl-L-methionine = 2-methyladenosine(2503) in 23S rRNA + 5'-deoxyadenosine + L-methionine + 2 oxidized [2Fe-2S]-[ferredoxin] + S-adenosyl-L-homocysteine. It carries out the reaction adenosine(37) in tRNA + 2 reduced [2Fe-2S]-[ferredoxin] + 2 S-adenosyl-L-methionine = 2-methyladenosine(37) in tRNA + 5'-deoxyadenosine + L-methionine + 2 oxidized [2Fe-2S]-[ferredoxin] + S-adenosyl-L-homocysteine. Functionally, specifically methylates position 2 of adenine 2503 in 23S rRNA and position 2 of adenine 37 in tRNAs. m2A2503 modification seems to play a crucial role in the proofreading step occurring at the peptidyl transferase center and thus would serve to optimize ribosomal fidelity. The chain is Dual-specificity RNA methyltransferase RlmN from Cupriavidus metallidurans (strain ATCC 43123 / DSM 2839 / NBRC 102507 / CH34) (Ralstonia metallidurans).